The following is a 264-amino-acid chain: Purine nucleoside phosphorylase slr1573 (264 aa).

Residues histidine 61, cysteine 104, and histidine 121 each coordinate Zn(2+).

Belongs to the purine nucleoside phosphorylase YfiH/LACC1 family. As to quaternary structure, homodimer. Cu(2+) is required as a cofactor. Zn(2+) serves as cofactor.

It carries out the reaction adenosine + phosphate = alpha-D-ribose 1-phosphate + adenine. It catalyses the reaction S-methyl-5'-thioadenosine + phosphate = 5-(methylsulfanyl)-alpha-D-ribose 1-phosphate + adenine. The catalysed reaction is inosine + phosphate = alpha-D-ribose 1-phosphate + hypoxanthine. The enzyme catalyses adenosine + H2O + H(+) = inosine + NH4(+). Purine nucleoside enzyme that catalyzes the phosphorolysis of adenosine and inosine nucleosides, yielding D-ribose 1-phosphate and the respective free bases, adenine and hypoxanthine. Also catalyzes the phosphorolysis of S-methyl-5'-thioadenosine into adenine and S-methyl-5-thio-alpha-D-ribose 1-phosphate. Also has adenosine deaminase activity. The polypeptide is Purine nucleoside phosphorylase slr1573 (Synechocystis sp. (strain ATCC 27184 / PCC 6803 / Kazusa)).